We begin with the raw amino-acid sequence, 244 residues long: Cysteine-rich secretory protein 2 (244 aa).

The signal sequence occupies residues 1–21 (MALLPVVVFLITMLLPCVLTN). In terms of domain architecture, SCP spans 43-170 (NKHNQLRKSV…SLKYYYVCQY (128 aa)). Cystine bridges form between C190/C197, C193/C202, C206/C239, C215/C233, and C224/C237. In terms of domain architecture, ShKT spans 206–239 (CEYEDLLSNCESLKNTAGCEHQLLVEKCKATCRC).

This sequence belongs to the CRISP family. As to quaternary structure, interacts with NSUN4 isoform 3. In terms of tissue distribution, testis.

Its subcellular location is the secreted. Functionally, may regulate some ion channels' activity and thereby regulate calcium fluxes during sperm capacitation. The protein is Cysteine-rich secretory protein 2 (CRISP2) of Cavia porcellus (Guinea pig).